We begin with the raw amino-acid sequence, 248 residues long: D-xylose 1-dehydrogenase (248 aa).

7 residues coordinate NAD(+): Asp42, Asp68, Asn91, Tyr156, Lys160, Val189, and Thr191. The Proton acceptor role is filled by Tyr156.

It belongs to the short-chain dehydrogenases/reductases (SDR) family.

The enzyme catalyses D-xylose + NAD(+) = D-xylono-1,5-lactone + NADH + H(+). Involved in the degradation of D-xylose. Catalyzes the initial reaction in the xylose utilization pathway by oxydizing D-xylose into D-xylonolactone. Shows some activity with L-arabinose and D-lyxose, but D-xylose is clearly the best substrate. Has no activity with D-ribose, D-glucose, D-galactose or D-mannose. This Caulobacter vibrioides (strain ATCC 19089 / CIP 103742 / CB 15) (Caulobacter crescentus) protein is D-xylose 1-dehydrogenase.